The sequence spans 496 residues: L-carnitine dehydrogenase/betainyl-CoA thioesterase (496 aa).

Residues 1–335 (MTTITKAACI…KRLWEKGGSP (335 aa)) form an L-carnitine dehydrogenase region. Residue 11–16 (GGGVIG) coordinates NAD(+). The segment at 336-496 (SKSLDASGPL…GAGRHVGQKR (161 aa)) is betainyl-CoA thioesterase.

In the N-terminal section; belongs to the 3-hydroxyacyl-CoA dehydrogenase family. L-carnitine dehydrogenase subfamily. This sequence in the C-terminal section; belongs to the betainyl-CoA thioesterase family. In terms of assembly, homodimer.

Its subcellular location is the cytoplasm. It catalyses the reaction carnitine + NAD(+) = 3-dehydrocarnitine + NADH + H(+). The enzyme catalyses N,N,N-trimethylglycyl-CoA + H2O = glycine betaine + CoA + H(+). It functions in the pathway amine and polyamine metabolism; carnitine metabolism. Functionally, multifunctional enzyme that catalyzes the NAD(+)-dependent oxidation of L-carnitine to 3-dehydrocarnitine and the cleavage of betainyl-CoA (N,N,N-trimethylglycyl-CoA) into glycine betaine and coenzyme A. Can also hydrolyze L-carnitinyl-CoA, but with much lower efficiency. Is involved in a L-carnitine degradation pathway that allows R.meliloti to grow on L-carnitine as the sole source of carbon and nitrogen. This Rhizobium meliloti (strain 1021) (Ensifer meliloti) protein is L-carnitine dehydrogenase/betainyl-CoA thioesterase.